The sequence spans 152 residues: Snaclec lebecin subunit alpha (152 aa).

The signal sequence occupies residues 1–23 (MGRSISVSFGLLVVFLSLSGTGA). Disulfide bonds link Cys-27/Cys-38, Cys-54/Cys-147, and Cys-122/Cys-139. Residues 34–148 (YEGGCYYVFD…CELAYHFICS (115 aa)) enclose the C-type lectin domain.

As to quaternary structure, heterodimer with the beta subunit (AC W5XCJ6); disulfide-linked. In terms of tissue distribution, expressed by the venom gland.

The protein localises to the secreted. Functionally, inhibits human breast cancer cells (MDA-MB231) migration and proliferation, as well as their adhesion to fibrinogen and fibronectin. This inhibition may be due to the binding to receptors of the integrin family, probably alpha-v/beta-3 (ITGAV/ITGB3) (40% inhibition of cell adhesion) and alpha-5/beta-1 (ITGA5/ITGB1) (by comparison with lebectin). The polypeptide is Snaclec lebecin subunit alpha (Macrovipera lebetinus (Levantine viper)).